We begin with the raw amino-acid sequence, 309 residues long: Malate dehydrogenase (309 aa).

Residues 9–14 (GAGAVG) and Asp33 contribute to the NAD(+) site. Substrate is bound by residues Arg82 and Arg88. NAD(+) is bound by residues Asn95 and 118–120 (VTN). Residues Asn120 and Arg151 each contribute to the substrate site. His175 acts as the Proton acceptor in catalysis.

It belongs to the LDH/MDH superfamily. MDH type 3 family.

It carries out the reaction (S)-malate + NAD(+) = oxaloacetate + NADH + H(+). Its function is as follows. Catalyzes the reversible oxidation of malate to oxaloacetate. The polypeptide is Malate dehydrogenase (Thermomicrobium roseum (strain ATCC 27502 / DSM 5159 / P-2)).